A 343-amino-acid polypeptide reads, in one-letter code: MTVSRDSLVLIHPAVTQQPELLETIEKGSILSETTIVAQYLINKLNDGTISPDDEKYDVIYYVTPEKPEAIQFPPKLIPVLHKTLKPSGRLYGLSDTLKVDALINGFEIVSNNGSEYYWVKESREKKAPVSISLKGNMKNGASAPVALPSFKKLNKTQPIGSSPSAGLAVSLKKLPTFKKLTKKVSAIKLTDSDLEDDDDDLESDDSANNSKTKFFDDFDDPETGDSIDEDDLIAETEEDTITMIQCGKSKQRRRKACKDCSCGLKEMEEQEIESRRAKQQQVIKFSEEELTEIDFTIEGKKVGGCGSCALGDAFRCSGCPYLGLPAFKPGQSINLNSISDDL.

The tract at residues 1 to 188 is N-terminal SAM-like domain; sequence MTVSRDSLVL…KKLTKKVSAI (188 aa). The segment at 189–240 is linker; that stretch reads KLTDSDLEDDDDDLESDDSANNSKTKFFDDFDDPETGDSIDEDDLIAETEED. 2 stretches are compositionally biased toward acidic residues: residues 195 to 206 and 218 to 228; these read LEDDDDDLESDD and DFDDPETGDSI. Positions 195 to 228 are disordered; sequence LEDDDDDLESDDSANNSKTKFFDDFDDPETGDSI. Residues Cys-247, Cys-258, Cys-261, and Cys-263 each contribute to the [2Fe-2S] cluster site. The tract at residues 247-263 is fe-S binding site A; that stretch reads CGKSKQRRRKACKDCSC. Positions 306, 309, 317, and 320 each coordinate [4Fe-4S] cluster. 2 short sequence motifs (cx2C motif) span residues 306–309 and 317–320; these read CGSC and CSGC. Positions 306–320 are fe-S binding site B; it reads CGSCALGDAFRCSGC.

The protein belongs to the anamorsin family. Monomer. Interacts with TAH18. Interacts with MIA40. It depends on [2Fe-2S] cluster as a cofactor. [4Fe-4S] cluster is required as a cofactor.

The protein localises to the cytoplasm. Its subcellular location is the mitochondrion intermembrane space. Functionally, component of the cytosolic iron-sulfur (Fe-S) protein assembly (CIA) machinery required for the maturation of extramitochondrial Fe-S proteins. Part of an electron transfer chain functioning in an early step of cytosolic Fe-S biogenesis, facilitating the de novo assembly of a [4Fe-4S] cluster on the scaffold complex CFD1-NBP35. Electrons are transferred to DRE2 from NADPH via the FAD- and FMN-containing protein TAH18. TAH18-DRE2 are also required for the assembly of the diferric tyrosyl radical cofactor of ribonucleotide reductase (RNR), probably by providing electrons for reduction during radical cofactor maturation in the catalytic small subunit RNR2. In Kluyveromyces lactis (strain ATCC 8585 / CBS 2359 / DSM 70799 / NBRC 1267 / NRRL Y-1140 / WM37) (Yeast), this protein is Fe-S cluster assembly protein DRE2.